A 692-amino-acid polypeptide reads, in one-letter code: MARKTPLNRIRNIGIAAHIDAGKTTTSERILFYTGVSHKIGEVHDGAATMDWMEQEKERGITITSAATTCFWKDHQINLIDTPGHVDFTIEVERSMRVLDGAVSVFCSVGGVQPQSETVWRQANKYGVPRIVFVNKMDRIGANFYNVENQIKQRLKANPVPINIPIGAEDTFIGVIDLVQMKAIVWNNETMGAKYDVEEIPSDLLERAKEYREKLVEAIAEQDEALMEKYLGGEELSVEEIKKGIKIGCLNMSLVPMLCGSSFKNKGVQTLLDAVIDYLPAPTEVVDIKGIDPKTEEEVFVKSSDDGEFAGLAFKIMTDPFVGQLTFVRVYRGKLESGSYVYNSTKDKKERVGRLLKMHSNKREDIKEVYAGEICAFVGLKDTLTGDTLCDEKNAVVLERMEFPEPVIHIAVEPKTKADQEKMGVALGKLAEEDPSFRVMTQEETGQTLIGGMGELHLEIIVDRLKREFKVEAEIGQPQVAFRETIRSSVSKEHKYAKQSGGRGQYGHVFIKLEPKEPGSGYEFVNEISGGVIPKEYIPAVDKGIQEAMQNGVLAGYPVVDFKVTLYDGSYHDVDSSEMAFKIAGSMAFKEASRAANPVLLEPMMKVEVEVPEEYMGDVIGDLNRRRGQINSMDDRLGLKIVNAFVPLVEMFGYSTDLRSATQGRGTYSMEFDHYGEVPSNIAKEIVEKRKG.

The 276-residue stretch at 8 to 283 folds into the tr-type G domain; sequence NRIRNIGIAA…AVIDYLPAPT (276 aa). GTP-binding positions include 17 to 24, 81 to 85, and 135 to 138; these read AHIDAGKT, DTPGH, and NKMD.

This sequence belongs to the TRAFAC class translation factor GTPase superfamily. Classic translation factor GTPase family. EF-G/EF-2 subfamily.

The protein resides in the cytoplasm. Catalyzes the GTP-dependent ribosomal translocation step during translation elongation. During this step, the ribosome changes from the pre-translocational (PRE) to the post-translocational (POST) state as the newly formed A-site-bound peptidyl-tRNA and P-site-bound deacylated tRNA move to the P and E sites, respectively. Catalyzes the coordinated movement of the two tRNA molecules, the mRNA and conformational changes in the ribosome. This is Elongation factor G from Helicobacter acinonychis (strain Sheeba).